The following is a 676-amino-acid chain: Head-specific guanylate cyclase (676 aa).

The region spanning 466-593 (TILFSDIVGF…HSVTIANKFE (128 aa)) is the Guanylate cyclase domain.

Belongs to the adenylyl cyclase class-4/guanylyl cyclase family. Heterodimer. Head, where it is preferentially expressed in the CNS and the retina. Not found in bodies.

It localises to the cytoplasm. It carries out the reaction GTP = 3',5'-cyclic GMP + diphosphate. Functionally, may have a role in phototransduction. Catalyzes the conversion of GTP to cGMP, a common second messenger that is utilized in a wide variety of cells and signal transduction pathways. A second subunit is required for enzyme activity. The polypeptide is Head-specific guanylate cyclase (Gycalpha99B) (Drosophila melanogaster (Fruit fly)).